The following is a 268-amino-acid chain: Undecaprenyl-diphosphatase (268 aa).

Helical transmembrane passes span 47 to 67, 83 to 103, 109 to 129, 144 to 164, 184 to 204, 218 to 238, and 246 to 266; these read FAVLIQLGAILAILSIYFAKL, FVIGVLVAFLPAAMIGAVAGS, LFNPWVVCFSLIVGGAILLWV, FPLPMYFYIGCAQCLAMIPGV, AAEFSFFLAIPTMVGAFVYDF, IVAIGFVVSFITAVIVVKTFL, and FELFAWWRVIVGTLGLIALAM.

It belongs to the UppP family.

It is found in the cell inner membrane. The catalysed reaction is di-trans,octa-cis-undecaprenyl diphosphate + H2O = di-trans,octa-cis-undecaprenyl phosphate + phosphate + H(+). Catalyzes the dephosphorylation of undecaprenyl diphosphate (UPP). Confers resistance to bacitracin. The sequence is that of Undecaprenyl-diphosphatase from Rhodopseudomonas palustris (strain BisB5).